The primary structure comprises 766 residues: FYVE, RhoGEF and PH domain-containing protein 4 (766 aa).

Disordered stretches follow at residues 1 to 20 (MEEI…PSKV), 46 to 83 (NLNA…DKTQ), and 134 to 188 (ETAT…ESPL). The actin filament-binding stretch occupies residues 1 to 150 (MEEIKPASAS…SPTTDSCDGN (150 aa)). Composition is skewed to polar residues over residues 58–83 (LTTT…DKTQ) and 145–157 (DSCD…SSYR). A compositionally biased stretch (basic and acidic residues) spans 167–184 (LEERGAETETKVQERENG). In terms of domain architecture, DH spans 206-393 (KLHKIANELL…STAASHSNSA (188 aa)). In terms of domain architecture, PH 1 spans 422–521 (ELIKEGQILK…WIKALQETID (100 aa)). An FYVE-type zinc finger spans residues 559–619 (DNEVTMCMKC…VCKDCYQIIS (61 aa)). Zn(2+)-binding residues include C565, C568, C582, C585, C590, C593, C611, and C614. Positions 643-740 (NSVVCSFLQY…WLKVILLAVT (98 aa)) constitute a PH 2 domain. Residues S702 and S716 each carry the phosphoserine modification. The disordered stretch occupies residues 742–766 (ETPGGPNEHPATLDDHPEPKKKSEC). A compositionally biased stretch (basic and acidic residues) spans 752 to 766 (ATLDDHPEPKKKSEC).

In terms of assembly, homooligomer. Expressed in different tissues, including brain, cerebellum, peripheral nerve, skeletal muscle, heart, uterus, placenta and testis.

It localises to the cytoplasm. The protein localises to the cytoskeleton. The protein resides in the cell projection. Its subcellular location is the filopodium. Activates CDC42, a member of the Ras-like family of Rho- and Rac proteins, by exchanging bound GDP for free GTP. Plays a role in regulating the actin cytoskeleton and cell shape. Activates MAPK8. The polypeptide is FYVE, RhoGEF and PH domain-containing protein 4 (FGD4) (Homo sapiens (Human)).